A 138-amino-acid polypeptide reads, in one-letter code: MSFGEIIVILVVAILVLGPDKLPEAIVQIAKILKAVKRNIDDAKSSIEKEIRINDLKEEAKKYKDEFSSTNENIRKKLSFEEFDDLKRDILDKTKVDLTFDSRDDKVKNNLSGQNLNTEEKPNLSKLETQDKNGKINV.

A helical transmembrane segment spans residues 2 to 18; it reads SFGEIIVILVVAILVLG. The tract at residues 109–138 is disordered; the sequence is NNLSGQNLNTEEKPNLSKLETQDKNGKINV. Positions 118–138 are enriched in basic and acidic residues; that stretch reads TEEKPNLSKLETQDKNGKINV.

It belongs to the TatB family. As to quaternary structure, the Tat system comprises two distinct complexes: a TatABC complex, containing multiple copies of TatA, TatB and TatC subunits, and a separate TatA complex, containing only TatA subunits. Substrates initially bind to the TatABC complex, which probably triggers association of the separate TatA complex to form the active translocon.

Its subcellular location is the cell inner membrane. Its function is as follows. Part of the twin-arginine translocation (Tat) system that transports large folded proteins containing a characteristic twin-arginine motif in their signal peptide across membranes. Together with TatC, TatB is part of a receptor directly interacting with Tat signal peptides. TatB may form an oligomeric binding site that transiently accommodates folded Tat precursor proteins before their translocation. The protein is Sec-independent protein translocase protein TatB of Campylobacter jejuni subsp. jejuni serotype O:2 (strain ATCC 700819 / NCTC 11168).